A 201-amino-acid chain; its full sequence is Large ribosomal subunit protein uL4 (201 aa).

Positions 45–71 (AQKTRAEVTGSGKKPWRQKGTGRARAG) are disordered.

This sequence belongs to the universal ribosomal protein uL4 family. In terms of assembly, part of the 50S ribosomal subunit.

Functionally, one of the primary rRNA binding proteins, this protein initially binds near the 5'-end of the 23S rRNA. It is important during the early stages of 50S assembly. It makes multiple contacts with different domains of the 23S rRNA in the assembled 50S subunit and ribosome. Forms part of the polypeptide exit tunnel. The sequence is that of Large ribosomal subunit protein uL4 from Shewanella halifaxensis (strain HAW-EB4).